The following is a 381-amino-acid chain: Opsin-1 (381 aa).

Residues M1–W53 lie on the Extracellular side of the membrane. An N-linked (GlcNAc...) asparagine glycan is attached at N24. A helical membrane pass occupies residues H54–I78. Residues F79–N90 lie on the Cytoplasmic side of the membrane. A helical membrane pass occupies residues L91–C115. Over Y116 to Y130 the chain is Extracellular. C127 and C204 are disulfide-bonded. The chain crosses the membrane as a helical span at residues A131 to L150. Residues D151–T169 lie on the Cytoplasmic side of the membrane. Residues A170–N193 traverse the membrane as a helical segment. Residues R194–S217 are Extracellular-facing. N-linked (GlcNAc...) asparagine glycosylation occurs at N200. A helical transmembrane segment spans residues Y218–V245. Over S246–K280 the chain is Cytoplasmic. Residues V281 to I304 form a helical membrane-spanning segment. Residues F305–S311 are Extracellular-facing. The chain crosses the membrane as a helical span at residues P312 to S336. An N6-(retinylidene)lysine modification is found at K323. Residues H337 to A381 are Cytoplasmic-facing. Residues A354–V370 are compositionally biased toward polar residues. The disordered stretch occupies residues A354–A381. Basic and acidic residues predominate over residues S371–A381.

Belongs to the G-protein coupled receptor 1 family. Opsin subfamily. Post-translationally, phosphorylated on some or all of the serine and threonine residues present in the C-terminal region.

It is found in the cell projection. Its subcellular location is the rhabdomere membrane. Visual pigments are the light-absorbing molecules that mediate vision. They consist of an apoprotein, opsin, covalently linked to cis-retinal. This chain is Opsin-1 (Lo1), found in Schistocerca gregaria (Desert locust).